We begin with the raw amino-acid sequence, 82 residues long: Cytochrome b559 subunit alpha (82 aa).

A helical membrane pass occupies residues 22–36 (VIHFVTLPSIFLAGF). His24 provides a ligand contact to heme.

This sequence belongs to the PsbE/PsbF family. Heterodimer of an alpha subunit and a beta subunit. PSII is composed of 1 copy each of membrane proteins PsbA, PsbB, PsbC, PsbD, PsbE, PsbF, PsbH, PsbI, PsbJ, PsbK, PsbL, PsbM, PsbT, PsbX, PsbY, PsbZ, Psb30/Ycf12, peripheral proteins PsbO, CyanoQ (PsbQ), PsbU, PsbV and a large number of cofactors. It forms dimeric complexes. It depends on heme b as a cofactor.

It localises to the cellular thylakoid membrane. This b-type cytochrome is tightly associated with the reaction center of photosystem II (PSII). PSII is a light-driven water:plastoquinone oxidoreductase that uses light energy to abstract electrons from H(2)O, generating O(2) and a proton gradient subsequently used for ATP formation. It consists of a core antenna complex that captures photons, and an electron transfer chain that converts photonic excitation into a charge separation. In Parasynechococcus marenigrum (strain WH8102), this protein is Cytochrome b559 subunit alpha.